The primary structure comprises 177 residues: MKVPEDLVLVGYISGAYGLNGWVRVRPYSADADALLNAKTWWLDKPEFRDVAMMQSKIHSGDVVAQLMGVAGRDAAEALKGATVQIPRSHFPALSDNEFYWVDLIGLEVENLQGVRLGQVSDMMDNGAHPILRVAVPQTSEADPKAAQELLIPFVEQFVITIDQTAKKITVDWGLDY.

Residues 96-177 (DNEFYWVDLI…KITVDWGLDY (82 aa)) form the PRC barrel domain.

This sequence belongs to the RimM family. Binds ribosomal protein uS19.

The protein localises to the cytoplasm. Its function is as follows. An accessory protein needed during the final step in the assembly of 30S ribosomal subunit, possibly for assembly of the head region. Essential for efficient processing of 16S rRNA. May be needed both before and after RbfA during the maturation of 16S rRNA. It has affinity for free ribosomal 30S subunits but not for 70S ribosomes. In Herminiimonas arsenicoxydans, this protein is Ribosome maturation factor RimM.